A 235-amino-acid chain; its full sequence is 5'-methylthioadenosine/S-adenosylhomocysteine nucleosidase (235 aa).

The Proton acceptor role is filled by glutamate 12. Residues glycine 78, isoleucine 152, and 173–174 (ME) each bind substrate. Residue aspartate 197 is the Proton donor of the active site.

The protein belongs to the PNP/UDP phosphorylase family. MtnN subfamily. Homodimer.

It carries out the reaction S-adenosyl-L-homocysteine + H2O = S-(5-deoxy-D-ribos-5-yl)-L-homocysteine + adenine. The catalysed reaction is S-methyl-5'-thioadenosine + H2O = 5-(methylsulfanyl)-D-ribose + adenine. It catalyses the reaction 5'-deoxyadenosine + H2O = 5-deoxy-D-ribose + adenine. Its pathway is amino-acid biosynthesis; L-methionine biosynthesis via salvage pathway; S-methyl-5-thio-alpha-D-ribose 1-phosphate from S-methyl-5'-thioadenosine (hydrolase route): step 1/2. Its function is as follows. Catalyzes the irreversible cleavage of the glycosidic bond in both 5'-methylthioadenosine (MTA) and S-adenosylhomocysteine (SAH/AdoHcy) to adenine and the corresponding thioribose, 5'-methylthioribose and S-ribosylhomocysteine, respectively. Also cleaves 5'-deoxyadenosine, a toxic by-product of radical S-adenosylmethionine (SAM) enzymes, into 5-deoxyribose and adenine. Thus, is required for in vivo function of the radical SAM enzymes biotin synthase and lipoic acid synthase, that are inhibited by 5'-deoxyadenosine accumulation. This chain is 5'-methylthioadenosine/S-adenosylhomocysteine nucleosidase, found in Proteus mirabilis (strain HI4320).